The sequence spans 530 residues: FSD1-like protein (530 aa).

Met1 is modified (N-acetylmethionine). Residues 102-141 (KQEQARKSQELQSQISQCNNALENSEELLEFATRSLDIKE) are a coiled coil. A COS domain is found at 137-194 (LDIKEPEEFSKAARQIKDRVTMASAFRLSLKPKVSDNMTHLMVDFSQERQMLQTLKFL). A Fibronectin type-III domain is found at 196–300 (VPKAPEIDPV…DPVTLETKAL (105 aa)). One can recognise a B30.2/SPRY domain in the interval 300–506 (LNFNLDNSSS…LSTGMQVPSA (207 aa)). Positions 322–366 (WDPTGGKGQESKIKGKENKGRSGTPSPKRTSVGSRPPAVRGSRDR) are disordered. Basic and acidic residues predominate over residues 330–341 (QESKIKGKENKG). Over residues 342–354 (RSGTPSPKRTSVG) the composition is skewed to polar residues. Ser520 and Ser523 each carry phosphoserine.

This Homo sapiens (Human) protein is FSD1-like protein (FSD1L).